A 479-amino-acid polypeptide reads, in one-letter code: Adenylate kinase 8 (479 aa).

Adenylate kinase stretches follow at residues 58–258 (PKVV…TYVQ) and 269–471 (PKVL…SGII). 67–72 (ASGKTT) contacts ATP. An NMP 1 region spans residues 87–113 (TKESLLEREFSRLSVEAKSYYQVYKKI). AMP is bound by residues 140–143 (GIPE), Gln147, and Arg203. The LID 1 stretch occupies residues 177 to 206 (GKRIDPVTGEIYHTTFDWPPEPEIQNRLRQ). 278-283 (GSGKRL) is a binding site for ATP. The tract at residues 298–327 (SCGQLLKEAVAAKSSFGELIQPFFEKRMTV) is NMP 2. AMP-binding positions include 325–327 (MTV), 354–357 (GFPR), and Gln361. The interval 391–424 (LRRTDPVTGERFHLMYKPPPTIEVQVRLLQNPKD) is LID 2. Arg392 is a binding site for ATP.

This sequence belongs to the adenylate kinase family. In terms of assembly, interacts with CFAP45 and CFAP52; CFAP45 and AK8 dimerization may create a cavity at the interface of the dimer that can accommodate AMP.

It is found in the cytoplasm. Its subcellular location is the cytosol. It localises to the cytoskeleton. The protein localises to the cilium axoneme. The enzyme catalyses AMP + ATP = 2 ADP. The catalysed reaction is a 2'-deoxyribonucleoside 5'-diphosphate + ATP = a 2'-deoxyribonucleoside 5'-triphosphate + ADP. It carries out the reaction a ribonucleoside 5'-diphosphate + ATP = a ribonucleoside 5'-triphosphate + ADP. Its function is as follows. Nucleoside monophosphate (NMP) kinase that catalyzes the reversible transfer of the terminal phosphate group between nucleoside triphosphates and monophosphates. Has highest activity toward AMP, and weaker activity toward dAMP, CMP and dCMP. Also displays broad nucleoside diphosphate kinase activity. This is Adenylate kinase 8 (Ak8) from Mus musculus (Mouse).